Here is a 348-residue protein sequence, read N- to C-terminus: Phosphate acyltransferase (348 aa).

Belongs to the PlsX family. In terms of assembly, homodimer. Probably interacts with PlsY.

The protein localises to the cytoplasm. The catalysed reaction is a fatty acyl-[ACP] + phosphate = an acyl phosphate + holo-[ACP]. It participates in lipid metabolism; phospholipid metabolism. In terms of biological role, catalyzes the reversible formation of acyl-phosphate (acyl-PO(4)) from acyl-[acyl-carrier-protein] (acyl-ACP). This enzyme utilizes acyl-ACP as fatty acyl donor, but not acyl-CoA. The protein is Phosphate acyltransferase of Rhizobium leguminosarum bv. trifolii (strain WSM2304).